The following is a 463-amino-acid chain: Mitochondrial dynamics protein MIEF1 (463 aa).

Residues 1–23 (MAGAGERKGKKDDNGIGTAIDFV) lie on the Mitochondrial intermembrane side of the membrane. Residues 24–46 (LSNARLVLGVGGAAMLGIATLAV) traverse the membrane as a helical segment. The Cytoplasmic portion of the chain corresponds to 47–463 (KRMYDRAISA…LSEPEVLLQT (417 aa)). The segment at 49-195 (MYDRAISAPT…LSGSLYDDLQ (147 aa)) is dimerization. A phosphoserine mark is found at Ser55, Ser59, Ser79, and Ser94. Residues 57 to 77 (PTSPTRLSHSGKRSWEEPNWM) are disordered. The disordered stretch occupies residues 96–123 (QTLPTDSSTFDTDTFCPPRPKPVARKGQ). Over residues 100–110 (TDSSTFDTDTF) the composition is skewed to low complexity. Residues 160–169 (AAVDICAELR) form an important for interaction with DNM1L region. Residues Ser187, Ser189, and His201 each contribute to the ADP site. An important for interaction with DNM1L region spans residues 234 to 242 (RRENPEYFP). ADP-binding residues include Ser340, Arg342, and Lys368.

This sequence belongs to the SMCR7 family. Homodimer. Interacts with DNM1L. In terms of tissue distribution, expression is relatively high in heart, skeletal muscle, pancreas and kidney.

Its subcellular location is the mitochondrion outer membrane. In terms of biological role, mitochondrial outer membrane protein which regulates mitochondrial fission/fusion dynamics. Promotes the recruitment and association of the fission mediator dynamin-related protein 1 (DNM1L) to the mitochondrial surface independently of the mitochondrial fission FIS1 and MFF proteins. Regulates DNM1L GTPase activity and DNM1L oligomerization. Binds ADP and can also bind GDP, although with lower affinity. Does not bind CDP, UDP, ATP, AMP or GTP. Inhibits DNM1L GTPase activity in the absence of bound ADP. Requires ADP to stimulate DNM1L GTPase activity and the assembly of DNM1L into long, oligomeric tubules with a spiral pattern, as opposed to the ring-like DNM1L oligomers observed in the absence of bound ADP. Does not require ADP for its function in recruiting DNM1L. This is Mitochondrial dynamics protein MIEF1 from Homo sapiens (Human).